A 119-amino-acid polypeptide reads, in one-letter code: uncharacterized protein (119 aa).

It is found in the mitochondrion. It localises to the nucleus. This is an uncharacterized protein from Schizosaccharomyces pombe (strain 972 / ATCC 24843) (Fission yeast).